We begin with the raw amino-acid sequence, 119 residues long: Large ribosomal subunit protein bL12 (119 aa).

Belongs to the bacterial ribosomal protein bL12 family. Homodimer. Part of the ribosomal stalk of the 50S ribosomal subunit. Forms a multimeric L10(L12)X complex, where L10 forms an elongated spine to which 2 to 4 L12 dimers bind in a sequential fashion. Binds GTP-bound translation factors.

Functionally, forms part of the ribosomal stalk which helps the ribosome interact with GTP-bound translation factors. Is thus essential for accurate translation. The protein is Large ribosomal subunit protein bL12 of Lysinibacillus sphaericus (strain C3-41).